Consider the following 130-residue polypeptide: Small ribosomal subunit protein uS8 (130 aa).

This sequence belongs to the universal ribosomal protein uS8 family. In terms of assembly, part of the 30S ribosomal subunit. Contacts proteins S5 and S12.

In terms of biological role, one of the primary rRNA binding proteins, it binds directly to 16S rRNA central domain where it helps coordinate assembly of the platform of the 30S subunit. This chain is Small ribosomal subunit protein uS8, found in Shewanella sp. (strain MR-7).